The sequence spans 343 residues: MKNLLDLSYEELITEITNLGLERYRADQILDWIFNKKVNNFDEMTNLSKKHRALLKEHFSIPFLKLLDKKVSRIDGTTKFLWELEDGNTIESVMLFHPDRITACISTQVGCPVKCIFCATGMSGFVRNLTTGEIVAQILSMEKEEKKKIGNVVYMGMGEPLLNYENTIKSIRTLNHKKMGNIGIRRITISTVGIPDRIIQLAEEGLDVKLALSLHAPTNFKRDQLVPLNKKYSIEEILNAVKIYQKKTGNRVTIEYVLIKGMNDEISDAKKLAEILKNMKVFVNLIPVNPTVEDLKKPSRERLLTFKRILLESGIEAEIRREKGADIEAACGQLRLKRIKSTS.

The Proton acceptor role is filled by Glu91. Residues 97-326 (HPDRITACIS…AEIRREKGAD (230 aa)) form the Radical SAM core domain. Cys104 and Cys331 are disulfide-bonded. Cys111, Cys115, and Cys118 together coordinate [4Fe-4S] cluster. S-adenosyl-L-methionine contacts are provided by residues 158–159 (GE), Ser190, 213–215 (SLH), and Asn289. Cys331 functions as the S-methylcysteine intermediate in the catalytic mechanism.

It belongs to the radical SAM superfamily. RlmN family. [4Fe-4S] cluster serves as cofactor.

The protein resides in the cytoplasm. It carries out the reaction adenosine(2503) in 23S rRNA + 2 reduced [2Fe-2S]-[ferredoxin] + 2 S-adenosyl-L-methionine = 2-methyladenosine(2503) in 23S rRNA + 5'-deoxyadenosine + L-methionine + 2 oxidized [2Fe-2S]-[ferredoxin] + S-adenosyl-L-homocysteine. It catalyses the reaction adenosine(37) in tRNA + 2 reduced [2Fe-2S]-[ferredoxin] + 2 S-adenosyl-L-methionine = 2-methyladenosine(37) in tRNA + 5'-deoxyadenosine + L-methionine + 2 oxidized [2Fe-2S]-[ferredoxin] + S-adenosyl-L-homocysteine. Specifically methylates position 2 of adenine 2503 in 23S rRNA and position 2 of adenine 37 in tRNAs. The protein is Probable dual-specificity RNA methyltransferase RlmN of Thermotoga petrophila (strain ATCC BAA-488 / DSM 13995 / JCM 10881 / RKU-1).